A 131-amino-acid chain; its full sequence is Profilin-1 (131 aa).

The protein belongs to the profilin family. In terms of assembly, occurs in many kinds of cells as a complex with monomeric actin in a 1:1 ratio.

It is found in the cytoplasm. The protein localises to the cytoskeleton. Functionally, binds to actin and affects the structure of the cytoskeleton. At high concentrations, profilin prevents the polymerization of actin, whereas it enhances it at low concentrations. By binding to PIP2, it inhibits the formation of IP3 and DG. The protein is Profilin-1 (PRO1) of Hordeum vulgare (Barley).